The chain runs to 108 residues: DNA-binding protein HBbu (108 aa).

This sequence belongs to the bacterial histone-like protein family.

Its function is as follows. Histone-like DNA-binding protein which is capable of wrapping DNA to stabilize it, and thus to prevent its denaturation under extreme environmental conditions. This is DNA-binding protein HBbu (hbb) from Borrelia garinii subsp. bavariensis (strain ATCC BAA-2496 / DSM 23469 / PBi) (Borreliella bavariensis).